The primary structure comprises 144 residues: Large ribosomal subunit protein uL15 (144 aa).

Positions 1–44 are disordered; the sequence is MKLNELMPSEGSRTNRKRIGRGTSSGTGKTAGRGQKGQKARGKV. Residues 23–35 show a composition bias toward gly residues; that stretch reads TSSGTGKTAGRGQ.

This sequence belongs to the universal ribosomal protein uL15 family. Part of the 50S ribosomal subunit.

Functionally, binds to the 23S rRNA. The protein is Large ribosomal subunit protein uL15 of Pediococcus pentosaceus (strain ATCC 25745 / CCUG 21536 / LMG 10740 / 183-1w).